A 263-amino-acid chain; its full sequence is 3-methyl-2-oxobutanoate hydroxymethyltransferase (263 aa).

Mg(2+)-binding residues include Asp45 and Asp84. Residues 45 to 46 (DS), Asp84, and Lys113 each bind 3-methyl-2-oxobutanoate. Glu115 is a binding site for Mg(2+). Glu182 acts as the Proton acceptor in catalysis.

This sequence belongs to the PanB family. Homodecamer; pentamer of dimers. The cofactor is Mg(2+).

The protein localises to the cytoplasm. The enzyme catalyses 3-methyl-2-oxobutanoate + (6R)-5,10-methylene-5,6,7,8-tetrahydrofolate + H2O = 2-dehydropantoate + (6S)-5,6,7,8-tetrahydrofolate. It participates in cofactor biosynthesis; coenzyme A biosynthesis. Catalyzes the reversible reaction in which hydroxymethyl group from 5,10-methylenetetrahydrofolate is transferred onto alpha-ketoisovalerate to form ketopantoate. The chain is 3-methyl-2-oxobutanoate hydroxymethyltransferase from Ignicoccus hospitalis (strain KIN4/I / DSM 18386 / JCM 14125).